The primary structure comprises 693 residues: Sodium-dependent phosphate transport protein 2B (693 aa).

Residues 1–46 (MAPWPELENSQPTSEKYTVKADGEQSAKPEKAKETEKDDTGTPITK) are disordered. The Cytoplasmic portion of the chain corresponds to 1–89 (MAPWPELENS…KWSERDTKGK (89 aa)). Over residues 17–40 (YTVKADGEQSAKPEKAKETEKDDT) the composition is skewed to basic and acidic residues. A helical membrane pass occupies residues 90–110 (ILCVFQGIGKFILLLVFLYFF). The Extracellular portion of the chain corresponds to 111–135 (VCSLDVLSSAFQLVGGKVAGKFFNN). A helical membrane pass occupies residues 136–156 (NSIMSNPLAGMVIGVLVTVLV). Topologically, residues 157-212 (QSSSTSTSIVVSMVASSLLPVHAAIPIIMGANIGTSITNTIVALMQAGDRKEFRRA) are cytoplasmic. A helical membrane pass occupies residues 213 to 233 (FAGATVHDFFNWLSVLVLLPL). Over 234–361 (EAATGYLERL…IFVNFNLSDA (128 aa)) the chain is Extracellular. Cys302 and Cys349 form a disulfide bridge. N-linked (GlcNAc...) asparagine glycans are attached at residues Asn307 and Asn320. Residues 362–382 (IVGTILLITSLLILCTCLILI) form a helical membrane-spanning segment. Topologically, residues 383-408 (VKLLGSVLRGQVAAVIKKTINTDFPY) are cytoplasmic. Residues 409-429 (PFSWVTGYLAILVGAGMTFIV) form a helical membrane-spanning segment. Over 430–485 (QSSSVFTSAMTPLIGIGVISIQRAYPLTLGANIGTTTTAILAALASPGSTLKSSLQ) the chain is Extracellular. The chain crosses the membrane as a helical span at residues 486-506 (IALCHFFFNISGIILWYPIPF). The Cytoplasmic portion of the chain corresponds to 507–525 (TRLPIRLAKGLGNISSKYR). A helical membrane pass occupies residues 526 to 546 (WFAIVYLIVFFLLIPLAVFGL). Over 547–550 (SLIG) the chain is Extracellular. Residues 551–571 (WPVLVGVASPIVLVILLVVVL) traverse the membrane as a helical segment. The Cytoplasmic segment spans residues 572 to 693 (KILQSFCPGS…TKIVSSVTAL (122 aa)).

This sequence belongs to the SLC34A transporter family. Post-translationally, glycosylated.

The protein localises to the apical cell membrane. It carries out the reaction 3 Na(+)(out) + phosphate(out) = 3 Na(+)(in) + phosphate(in). In terms of biological role, involved in actively transporting phosphate into cells via Na(+) cotransport. This Bos taurus (Bovine) protein is Sodium-dependent phosphate transport protein 2B (SLC34A2).